A 678-amino-acid chain; its full sequence is Endopolyphosphatase (678 aa).

Topologically, residues 1–2 (MR) are cytoplasmic. The chain crosses the membrane as a helical; Signal-anchor for type II membrane protein span at residues 3–23 (SPLLASLFALALSIASSEAAI). Residues 24–678 (SSTEQVPLSG…ELMLVSTETD (655 aa)) lie on the Vacuolar side of the membrane. The disordered stretch occupies residues 70–109 (YKTGSTFDSGCHRKPKKDGKSEGKKATENERGNEDLDDKE). Residues 87–103 (DGKSEGKKATENERGNE) are compositionally biased toward basic and acidic residues. Asn138, Asn369, and Asn447 each carry an N-linked (GlcNAc...) asparagine glycan. The tract at residues 504-547 (KGSGGHRHDVPKGDCSLPSNEDKPHCTFKRKPRHYSKRSPSRTN) is disordered. Positions 529–543 (CTFKRKPRHYSKRSP) are enriched in basic residues. N-linked (GlcNAc...) asparagine glycans are attached at residues Asn591 and Asn616.

It belongs to the endopolyphosphatase PPN1 family. Requires a divalent metal cation as cofactor. Post-translationally, processing by proteases in the vacuole may be required for activation.

The protein localises to the vacuole membrane. The catalysed reaction is [phosphate](n+1) + n H2O = (n+1) phosphate + n H(+). Catalyzes the hydrolysis of inorganic polyphosphate (polyP) chains of many hundreds of phosphate residues into shorter lengths. In Cryptococcus neoformans var. neoformans serotype D (strain JEC21 / ATCC MYA-565) (Filobasidiella neoformans), this protein is Endopolyphosphatase (PPN1).